Consider the following 926-residue polypeptide: Alpha-aminoadipic semialdehyde synthase, mitochondrial (926 aa).

Residues 1–27 (MLRAQRPRLARLRACLSRGLHHKPVMA) constitute a mitochondrion transit peptide. Positions 28 to 455 (LRREDVNAWE…DAVITSNGLL (428 aa)) are lysine-ketoglutarate reductase. 3 positions are modified to N6-acetyllysine: K48, K52, and K56. K93 is subject to N6-acetyllysine; alternate. The residue at position 93 (K93) is an N6-succinyllysine; alternate. K128 is modified (N6-acetyllysine). K138 bears the N6-acetyllysine; alternate mark. An N6-succinyllysine; alternate modification is found at K138. Position 274 is an N6-succinyllysine (K274). K286 is modified (N6-acetyllysine; alternate). K286 is subject to N6-succinyllysine; alternate. K333 carries the N6-succinyllysine modification. An N6-acetyllysine; alternate modification is found at K458. K458 carries the post-translational modification N6-succinyllysine; alternate. A saccharopine dehydrogenase region spans residues 477 to 926 (MSTKKKVLVL…VFNTQSTIKL (450 aa)). S488, D512, and Q516 together coordinate NAD(+). K523 and K535 each carry N6-acetyllysine; alternate. Residues K523 and K535 each carry the N6-succinyllysine; alternate modification. 3 residues coordinate NAD(+): L554, A576, and S577. Residue 577–578 (SY) participates in L-saccharopine binding. At K584 the chain carries N6-acetyllysine; alternate. K584 carries the N6-succinyllysine; alternate modification. Positions 603, 604, and 605 each coordinate NAD(+). Position 604 (D604) interacts with L-saccharopine. Residue R703 coordinates L-saccharopine. K707 carries the N6-acetyllysine modification. 724 to 726 (TLR) is an L-saccharopine binding site. Position 732 is an N6-succinyllysine (K732). K739 bears the N6-acetyllysine mark. Position 761 is an N6-acetyllysine; alternate (K761). At K761 the chain carries N6-succinyllysine; alternate. N6-acetyllysine is present on residues K778 and K780.

In the N-terminal section; belongs to the AlaDH/PNT family. The protein in the C-terminal section; belongs to the saccharopine dehydrogenase family. As to quaternary structure, homotetramer. Highly expressed in kidney and liver, very low expression is seen in heart, brain, spleen, lung, skeletal muscle and testis.

The protein localises to the mitochondrion. The catalysed reaction is L-saccharopine + NADP(+) + H2O = L-lysine + 2-oxoglutarate + NADPH + H(+). It carries out the reaction L-saccharopine + NAD(+) + H2O = (S)-2-amino-6-oxohexanoate + L-glutamate + NADH + H(+). It functions in the pathway amino-acid degradation; L-lysine degradation via saccharopine pathway; glutaryl-CoA from L-lysine: step 1/6. The protein operates within amino-acid degradation; L-lysine degradation via saccharopine pathway; glutaryl-CoA from L-lysine: step 2/6. Bifunctional enzyme that catalyzes the first two steps in lysine degradation. The chain is Alpha-aminoadipic semialdehyde synthase, mitochondrial from Mus musculus (Mouse).